Consider the following 570-residue polypeptide: MSTRISRSVYADMFGPTTGDRVRLADTDLIIEVEKDLTTYGEEVKFGGGKVIRDGMGQSQVTNKDGAADTVITNALIVDHWGIVKADVAITAGVITAIGKAGNPDVQPNVDIIIGPGTDVIAGEGKILTAGGFDSHIHFICPQQIEHALMSGVTTMLGGGTGPSHGTFATTCTPGPWHIGRMIQSFDAFPVNLGISGKGNAALPGPLKEMIEGGACALKLHEDWGTTPAAIDNCLSVADDYDIQVMIHTDTLNESGFVEDTVKAFKGRTIHAFHTEGAGGGHAPDIIKVASLENVLPSSTNPTRPFTKNTIDEHLDMLMVCHHLDPSIAEDLAFAESRIRKETIAAEDILHDLGALSMMSSDSQAMGRLGEVIIRTWQTADKMKKQRGALPQDSARNDNFRVKRYIAKYTINPAIAHGVSKLIGSVETGKMADLVLWSPAFFGVKPDCIIKGGSIVAAPMGDPNASIPTPQPVHYQPMFGAYGKALTVSSVVFTSQAAAAGNLARDLGIAKTLVPVSNVRGGISKKSMIHNDATPKLEVDPETYEVRADGELLTCAPAEVLPLAQRYFMF.

Residues 131-570 (GGFDSHIHFI…LPLAQRYFMF (440 aa)) form the Urease domain. Ni(2+)-binding residues include histidine 136, histidine 138, and lysine 219. Lysine 219 is modified (N6-carboxylysine). Residue histidine 221 coordinates substrate. Ni(2+)-binding residues include histidine 248 and histidine 274. The active-site Proton donor is the histidine 322. Aspartate 362 provides a ligand contact to Ni(2+).

This sequence belongs to the metallo-dependent hydrolases superfamily. Urease alpha subunit family. In terms of assembly, heterotrimer of UreA (gamma), UreB (beta) and UreC (alpha) subunits. Three heterotrimers associate to form the active enzyme. Requires Ni cation as cofactor. Post-translationally, carboxylation allows a single lysine to coordinate two nickel ions.

Its subcellular location is the cytoplasm. It carries out the reaction urea + 2 H2O + H(+) = hydrogencarbonate + 2 NH4(+). The protein operates within nitrogen metabolism; urea degradation; CO(2) and NH(3) from urea (urease route): step 1/1. The protein is Urease subunit alpha of Rhodopseudomonas palustris (strain TIE-1).